A 102-amino-acid polypeptide reads, in one-letter code: Large ribosomal subunit protein bL21 (102 aa).

Belongs to the bacterial ribosomal protein bL21 family. In terms of assembly, part of the 50S ribosomal subunit. Contacts protein L20.

In terms of biological role, this protein binds to 23S rRNA in the presence of protein L20. This Trichlorobacter lovleyi (strain ATCC BAA-1151 / DSM 17278 / SZ) (Geobacter lovleyi) protein is Large ribosomal subunit protein bL21.